Reading from the N-terminus, the 341-residue chain is Glycerol-3-phosphate dehydrogenase [NAD(P)+] (341 aa).

Serine 15, tryptophan 16, arginine 36, and lysine 110 together coordinate NADPH. Sn-glycerol 3-phosphate contacts are provided by lysine 110, glycine 139, and serine 141. Alanine 143 contacts NADPH. Sn-glycerol 3-phosphate contacts are provided by lysine 194, aspartate 247, serine 257, arginine 258, and asparagine 259. Lysine 194 (proton acceptor) is an active-site residue. Residue arginine 258 participates in NADPH binding. 2 residues coordinate NADPH: valine 282 and glutamate 284.

Belongs to the NAD-dependent glycerol-3-phosphate dehydrogenase family.

It localises to the cytoplasm. It carries out the reaction sn-glycerol 3-phosphate + NAD(+) = dihydroxyacetone phosphate + NADH + H(+). The enzyme catalyses sn-glycerol 3-phosphate + NADP(+) = dihydroxyacetone phosphate + NADPH + H(+). Its pathway is membrane lipid metabolism; glycerophospholipid metabolism. Catalyzes the reduction of the glycolytic intermediate dihydroxyacetone phosphate (DHAP) to sn-glycerol 3-phosphate (G3P), the key precursor for phospholipid synthesis. The chain is Glycerol-3-phosphate dehydrogenase [NAD(P)+] from Stenotrophomonas maltophilia (strain K279a).